Here is a 201-residue protein sequence, read N- to C-terminus: Peptide deformylase (201 aa).

The Fe cation site is built by C121 and H163. E164 is an active-site residue. H167 contributes to the Fe cation binding site.

This sequence belongs to the polypeptide deformylase family. Fe(2+) serves as cofactor.

It catalyses the reaction N-terminal N-formyl-L-methionyl-[peptide] + H2O = N-terminal L-methionyl-[peptide] + formate. In terms of biological role, removes the formyl group from the N-terminal Met of newly synthesized proteins. Requires at least a dipeptide for an efficient rate of reaction. N-terminal L-methionine is a prerequisite for activity but the enzyme has broad specificity at other positions. The sequence is that of Peptide deformylase from Parasynechococcus marenigrum (strain WH8102).